The primary structure comprises 378 residues: Zinc transporter 7 (378 aa).

Over 1-37 (MLPLSIKDDEYKPPKFNLFGKISGWFRSILSDKTSRN) the chain is Cytoplasmic. A helical membrane pass occupies residues 38–58 (LFFFLCLNLSFAFVELLYGIW). The Lumenal portion of the chain corresponds to 59-67 (SNCLGLISD). The helical transmembrane segment at 68–88 (SFHMFFDSTAILAGLAASVIS) threads the bilayer. The Cytoplasmic portion of the chain corresponds to 89–102 (KWRDNDAFSYGYVR). The chain crosses the membrane as a helical span at residues 103–123 (AEVLAGFVNGLFLIFTAFFIF). Over 124 to 140 (SEGVERALAPPDVHHER) the chain is Lumenal. Residues 141 to 161 (LLLVSILGFVVNLVGIFVFNH) form a helical membrane-spanning segment. The his-rich loop stretch occupies residues 161–220 (HGGHGHSHGSGHGHSHSLFNGALDHSHGHEDHCHSHGAKHGGAHSHDHDHAHGHGHLHSH). The Cytoplasmic portion of the chain corresponds to 162-238 (GGHGHSHGSG…AGPSRQILQG (77 aa)). Residues 186-228 (SHGHEDHCHSHGAKHGGAHSHDHDHAHGHGHLHSHDGPSFKET) form a disordered region. Basic and acidic residues predominate over residues 204–224 (HSHDHDHAHGHGHLHSHDGPS). A helical transmembrane segment spans residues 239–259 (VFLHILADTLGSIGVIASAIM). At 260-264 (MQNFG) the chain is on the lumenal side. A helical membrane pass occupies residues 265–285 (LMIADPICSILIAILIVVSVI). The Cytoplasmic portion of the chain corresponds to 286 to 378 (PLLRESIGIL…LYVQIDFAAM (93 aa)).

This sequence belongs to the cation diffusion facilitator (CDF) transporter (TC 2.A.4) family. SLC30A subfamily. In terms of assembly, homooligomer.

The protein resides in the golgi apparatus membrane. The protein localises to the cytoplasmic vesicle. It localises to the golgi apparatus. Its subcellular location is the trans-Golgi network. It is found in the sarcoplasmic reticulum. The protein resides in the mitochondrion. The enzyme catalyses Zn(2+)(in) = Zn(2+)(out). Functionally, zinc ion transporter mediating zinc entry from the cytosol into the lumen of organelles along the secretory pathway. By contributing to zinc ion homeostasis within the early secretory pathway, regulates the activation and folding of enzymes like alkaline phosphatases. The chain is Zinc transporter 7 from Rattus norvegicus (Rat).